A 708-amino-acid polypeptide reads, in one-letter code: Ribosomal RNA large subunit methyltransferase K/L (708 aa).

One can recognise a THUMP domain in the interval 43–154 (QIYRCCLWSR…KENALLGIDM (112 aa)).

The protein belongs to the methyltransferase superfamily. RlmKL family.

The protein resides in the cytoplasm. The enzyme catalyses guanosine(2445) in 23S rRNA + S-adenosyl-L-methionine = N(2)-methylguanosine(2445) in 23S rRNA + S-adenosyl-L-homocysteine + H(+). It carries out the reaction guanosine(2069) in 23S rRNA + S-adenosyl-L-methionine = N(2)-methylguanosine(2069) in 23S rRNA + S-adenosyl-L-homocysteine + H(+). Its function is as follows. Specifically methylates the guanine in position 2445 (m2G2445) and the guanine in position 2069 (m7G2069) of 23S rRNA. The polypeptide is Ribosomal RNA large subunit methyltransferase K/L (Vibrio cholerae serotype O1 (strain ATCC 39541 / Classical Ogawa 395 / O395)).